The sequence spans 179 residues: Large ribosomal subunit protein uL5 (179 aa).

The protein belongs to the universal ribosomal protein uL5 family. In terms of assembly, part of the 50S ribosomal subunit; part of the 5S rRNA/L5/L18/L25 subcomplex. Contacts the 5S rRNA and the P site tRNA. Forms a bridge to the 30S subunit in the 70S ribosome.

This is one of the proteins that bind and probably mediate the attachment of the 5S RNA into the large ribosomal subunit, where it forms part of the central protuberance. In the 70S ribosome it contacts protein S13 of the 30S subunit (bridge B1b), connecting the 2 subunits; this bridge is implicated in subunit movement. Contacts the P site tRNA; the 5S rRNA and some of its associated proteins might help stabilize positioning of ribosome-bound tRNAs. This chain is Large ribosomal subunit protein uL5, found in Prochlorococcus marinus (strain MIT 9303).